We begin with the raw amino-acid sequence, 320 residues long: Apolipoprotein E (320 aa).

A signal peptide spans 1–18 (MKVLWAAFLVAFLAGCQG). 8 repeat units span residues 82–103 (ALMD…EQLS), 104–125 (PVAE…ARLG), 126–147 (ADME…AMLG), 148–169 (QSTD…KRLL), 170–191 (RDVD…EGAE), 192–213 (RGVS…ARAA), 214–236 (TVGS…ERLR), and 237–258 (ARME…EQVE). The tract at residues 82–199 (ALMDETMKEL…AERGVSAIRE (118 aa)) is 8 X 22 AA approximate tandem repeats. A Methionine sulfoxide modification is found at methionine 145. Phosphoserine is present on serine 149. The interval 160-170 (HLRKLRKRLLR) is LDL and other lipoprotein receptors binding. 164–167 (LRKR) is a binding site for heparin. Residues 212 to 293 (AATVGSSLAS…SWFEPLVEDM (82 aa)) form a lipid-binding and lipoprotein association region. 232-239 (GERLRARM) contributes to the heparin binding site. A homooligomerization region spans residues 269–320 (QQMRLQAEAFQARLKSWFEPLVEDMQRQWAGLVEKVQAAVGASATPVPSDNH). The segment at 281-293 (RLKSWFEPLVEDM) is specificity for association with VLDL.

Belongs to the apolipoprotein A1/A4/E family. As to quaternary structure, homotetramer. May interact with ABCA1; functionally associated with ABCA1 in the biogenesis of HDLs. May interact with APP/A4 amyloid-beta peptide; the interaction is extremely stable in vitro but its physiological significance is unclear. May interact with MAPT. May interact with MAP2. In the cerebrospinal fluid, interacts with secreted SORL1. Interacts with PMEL; this allows the loading of PMEL luminal fragment on ILVs to induce fibril nucleation. APOE exists as multiple glycosylated and sialylated glycoforms within cells and in plasma. The extent of glycosylation and sialylation are tissue and context specific. In terms of processing, glycated in plasma VLDL. Post-translationally, phosphorylated by FAM20C in the extracellular medium.

The protein localises to the secreted. The protein resides in the extracellular space. It localises to the extracellular matrix. It is found in the extracellular vesicle. Its subcellular location is the endosome. The protein localises to the multivesicular body. In terms of biological role, APOE is an apolipoprotein, a protein associating with lipid particles, that mainly functions in lipoprotein-mediated lipid transport between organs via the plasma and interstitial fluids. APOE is a core component of plasma lipoproteins and is involved in their production, conversion and clearance. Apolipoproteins are amphipathic molecules that interact both with lipids of the lipoprotein particle core and the aqueous environment of the plasma. As such, APOE associates with chylomicrons, chylomicron remnants, very low density lipoproteins (VLDL) and intermediate density lipoproteins (IDL) but shows a preferential binding to high-density lipoproteins (HDL). It also binds a wide range of cellular receptors including the LDL receptor/LDLR, the LDL receptor-related proteins LRP1, LRP2 and LRP8 and the very low-density lipoprotein receptor/VLDLR that mediate the cellular uptake of the APOE-containing lipoprotein particles. Finally, APOE also has a heparin-binding activity and binds heparan-sulfate proteoglycans on the surface of cells, a property that supports the capture and the receptor-mediated uptake of APOE-containing lipoproteins by cells. A main function of APOE is to mediate lipoprotein clearance through the uptake of chylomicrons, VLDLs, and HDLs by hepatocytes. APOE is also involved in the biosynthesis by the liver of VLDLs as well as their uptake by peripheral tissues ensuring the delivery of triglycerides and energy storage in muscle, heart and adipose tissues. By participating in the lipoprotein-mediated distribution of lipids among tissues, APOE plays a critical role in plasma and tissues lipid homeostasis. APOE is also involved in two steps of reverse cholesterol transport, the HDLs-mediated transport of cholesterol from peripheral tissues to the liver, and thereby plays an important role in cholesterol homeostasis. First, it is functionally associated with ABCA1 in the biogenesis of HDLs in tissues. Second, it is enriched in circulating HDLs and mediates their uptake by hepatocytes. APOE also plays an important role in lipid transport in the central nervous system, regulating neuron survival and sprouting. The polypeptide is Apolipoprotein E (APOE) (Saimiri boliviensis boliviensis (Bolivian squirrel monkey)).